Reading from the N-terminus, the 422-residue chain is Probable metallocarboxypeptidase A (422 aa).

The N-terminal stretch at 1-17 is a signal peptide; that stretch reads MRSVLSLALLAANVVTA. A propeptide spans 18–112 (activation peptide); that stretch reads AVVAPFDYSG…FEAYSAGYAP (95 aa). The Peptidase M14 domain occupies 119–419; it reads SYHSYQDHLS…AGTVAMLKAV (301 aa). Zn(2+) is bound by residues His-179 and Glu-182. Residues 179–182, Arg-237, and 254–255 each bind substrate; these read HARE and NR. A disulfide bridge links Cys-248 with Cys-271. His-309 contributes to the Zn(2+) binding site. A substrate-binding site is contributed by 310–311; sequence SY. Glu-385 acts as the Proton donor/acceptor in catalysis.

The protein belongs to the peptidase M14 family. It depends on Zn(2+) as a cofactor.

It is found in the secreted. Functionally, extracellular metalloprotease that contributes to pathogenicity. This Arthroderma benhamiae (strain ATCC MYA-4681 / CBS 112371) (Trichophyton mentagrophytes) protein is Probable metallocarboxypeptidase A (MCPA).